Reading from the N-terminus, the 460-residue chain is GTPase Der (460 aa).

EngA-type G domains are found at residues 3-167 and 189-364; these read FTFA…PEPD and IRVA…ATWN. GTP-binding positions include 9-16, 56-60, 119-122, 195-202, 242-246, and 307-310; these read GRPNVGKS, DTAGL, NKSE, GRPNAGKS, and NKWD. Residues 365-449 enclose the KH-like domain; sequence RRVPTAALNR…PVRIMLREKA (85 aa).

Belongs to the TRAFAC class TrmE-Era-EngA-EngB-Septin-like GTPase superfamily. EngA (Der) GTPase family. As to quaternary structure, associates with the 50S ribosomal subunit.

GTPase that plays an essential role in the late steps of ribosome biogenesis. This chain is GTPase Der, found in Rhodopseudomonas palustris (strain BisA53).